Consider the following 241-residue polypeptide: ATP-dependent dethiobiotin synthetase BioD (241 aa).

13–18 (DIGKTV) contributes to the ATP binding site. Residue Thr-17 participates in Mg(2+) binding. The active site involves Lys-38. A substrate-binding site is contributed by Ser-42. Residues Asp-55, 116-119 (EGSG), and 180-181 (NK) contribute to the ATP site. Asp-55 and Glu-116 together coordinate Mg(2+).

This sequence belongs to the dethiobiotin synthetase family. As to quaternary structure, homodimer. Mg(2+) is required as a cofactor.

Its subcellular location is the cytoplasm. It catalyses the reaction (7R,8S)-7,8-diammoniononanoate + CO2 + ATP = (4R,5S)-dethiobiotin + ADP + phosphate + 3 H(+). It functions in the pathway cofactor biosynthesis; biotin biosynthesis; biotin from 7,8-diaminononanoate: step 1/2. Its function is as follows. Catalyzes a mechanistically unusual reaction, the ATP-dependent insertion of CO2 between the N7 and N8 nitrogen atoms of 7,8-diaminopelargonic acid (DAPA, also called 7,8-diammoniononanoate) to form a ureido ring. The protein is ATP-dependent dethiobiotin synthetase BioD of Clostridium kluyveri (strain NBRC 12016).